Here is a 393-residue protein sequence, read N- to C-terminus: 1-deoxy-D-xylulose 5-phosphate reductoisomerase (393 aa).

NADPH-binding residues include Thr-10, Gly-11, Ser-12, Ile-13, Arg-37, Gln-38, and Asn-124. A 1-deoxy-D-xylulose 5-phosphate-binding site is contributed by Lys-125. Glu-126 contacts NADPH. Residue Asp-150 coordinates Mn(2+). Positions 151, 152, 179, and 202 each coordinate 1-deoxy-D-xylulose 5-phosphate. Glu-152 is a Mn(2+) binding site. Residue Gly-208 participates in NADPH binding. Positions 215, 220, 221, and 224 each coordinate 1-deoxy-D-xylulose 5-phosphate. Mn(2+) is bound at residue Glu-224.

This sequence belongs to the DXR family. Mg(2+) is required as a cofactor. It depends on Mn(2+) as a cofactor.

The enzyme catalyses 2-C-methyl-D-erythritol 4-phosphate + NADP(+) = 1-deoxy-D-xylulose 5-phosphate + NADPH + H(+). It functions in the pathway isoprenoid biosynthesis; isopentenyl diphosphate biosynthesis via DXP pathway; isopentenyl diphosphate from 1-deoxy-D-xylulose 5-phosphate: step 1/6. Its function is as follows. Catalyzes the NADPH-dependent rearrangement and reduction of 1-deoxy-D-xylulose-5-phosphate (DXP) to 2-C-methyl-D-erythritol 4-phosphate (MEP). The chain is 1-deoxy-D-xylulose 5-phosphate reductoisomerase from Cupriavidus taiwanensis (strain DSM 17343 / BCRC 17206 / CCUG 44338 / CIP 107171 / LMG 19424 / R1) (Ralstonia taiwanensis (strain LMG 19424)).